Consider the following 445-residue polypeptide: Na(+)-translocating NADH-quinone reductase subunit A (445 aa).

This sequence belongs to the NqrA family. In terms of assembly, composed of six subunits; NqrA, NqrB, NqrC, NqrD, NqrE and NqrF.

The enzyme catalyses a ubiquinone + n Na(+)(in) + NADH + H(+) = a ubiquinol + n Na(+)(out) + NAD(+). Functionally, NQR complex catalyzes the reduction of ubiquinone-1 to ubiquinol by two successive reactions, coupled with the transport of Na(+) ions from the cytoplasm to the periplasm. NqrA to NqrE are probably involved in the second step, the conversion of ubisemiquinone to ubiquinol. This is Na(+)-translocating NADH-quinone reductase subunit A from Teredinibacter turnerae (strain ATCC 39867 / T7901).